Consider the following 71-residue polypeptide: Exodeoxyribonuclease 7 small subunit (71 aa).

The protein belongs to the XseB family. As to quaternary structure, heterooligomer composed of large and small subunits.

It is found in the cytoplasm. The catalysed reaction is Exonucleolytic cleavage in either 5'- to 3'- or 3'- to 5'-direction to yield nucleoside 5'-phosphates.. Functionally, bidirectionally degrades single-stranded DNA into large acid-insoluble oligonucleotides, which are then degraded further into small acid-soluble oligonucleotides. The protein is Exodeoxyribonuclease 7 small subunit of Clostridium botulinum (strain 657 / Type Ba4).